The chain runs to 381 residues: O-antigen chain mannosyltransferase B (381 aa).

It belongs to the glycosyltransferase group 1 family. Glycosyltransferase 4 subfamily.

The enzyme catalyses alpha-D-mannosyl-(1-&gt;3)-N-acetyl-alpha-D-glucosaminyl-di-trans,octa-cis-undecaprenyl diphosphate + 2 GDP-alpha-D-mannose = alpha-D-mannosyl-(1-&gt;3)-alpha-D-mannosyl-(1-&gt;3)-alpha-D-mannosyl-(1-&gt;3)-N-acetyl-alpha-D-glucosaminyl-di-trans,octa-cis-undecaprenyl diphosphate + 2 GDP + 2 H(+). The protein operates within bacterial outer membrane biogenesis; LPS O-antigen biosynthesis. Mannosyltransferase involved in the biosynthesis of the repeat unit of the lipopolysaccharide (LPS) O-antigen region. Catalyzes the transfer of two alpha-(1-&gt;3)-linked mannose residues to the product of the WbdC enzyme during the synthesis of the adapter region. This is O-antigen chain mannosyltransferase B from Escherichia coli.